A 466-amino-acid chain; its full sequence is Probable Xaa-Pro aminopeptidase pepP (466 aa).

Residues Asp-264, Asp-275, Glu-398, and Glu-438 each contribute to the Mn(2+) site.

Belongs to the peptidase M24B family. It depends on Mn(2+) as a cofactor.

The enzyme catalyses Release of any N-terminal amino acid, including proline, that is linked to proline, even from a dipeptide or tripeptide.. Functionally, catalyzes the removal of a penultimate prolyl residue from the N-termini of peptides. This chain is Probable Xaa-Pro aminopeptidase pepP (pepP), found in Aspergillus clavatus (strain ATCC 1007 / CBS 513.65 / DSM 816 / NCTC 3887 / NRRL 1 / QM 1276 / 107).